We begin with the raw amino-acid sequence, 219 residues long: N-(5'-phosphoribosyl)anthranilate isomerase (219 aa).

This sequence belongs to the TrpF family.

It carries out the reaction N-(5-phospho-beta-D-ribosyl)anthranilate = 1-(2-carboxyphenylamino)-1-deoxy-D-ribulose 5-phosphate. It functions in the pathway amino-acid biosynthesis; L-tryptophan biosynthesis; L-tryptophan from chorismate: step 3/5. This chain is N-(5'-phosphoribosyl)anthranilate isomerase, found in Bradyrhizobium sp. (strain ORS 278).